The sequence spans 183 residues: Peptidyl-tRNA hydrolase (183 aa).

Tyrosine 15 provides a ligand contact to tRNA. The active-site Proton acceptor is histidine 20. Residues tyrosine 67 and asparagine 69 each contribute to the tRNA site.

This sequence belongs to the PTH family. Monomer.

It is found in the cytoplasm. The enzyme catalyses an N-acyl-L-alpha-aminoacyl-tRNA + H2O = an N-acyl-L-amino acid + a tRNA + H(+). Its function is as follows. Hydrolyzes ribosome-free peptidyl-tRNAs (with 1 or more amino acids incorporated), which drop off the ribosome during protein synthesis, or as a result of ribosome stalling. In terms of biological role, catalyzes the release of premature peptidyl moieties from peptidyl-tRNA molecules trapped in stalled 50S ribosomal subunits, and thus maintains levels of free tRNAs and 50S ribosomes. In Chlamydia abortus (strain DSM 27085 / S26/3) (Chlamydophila abortus), this protein is Peptidyl-tRNA hydrolase.